The following is a 315-amino-acid chain: Ribonuclease HII (315 aa).

Positions 78 to 267 (TLVAGVDEAG…VREALGLAPL (190 aa)) constitute an RNase H type-2 domain. Positions 84, 85, and 176 each coordinate a divalent metal cation. Positions 273–292 (APPPESAAEPGGEGAIAGIA) are disordered. The span at 278 to 292 (SAAEPGGEGAIAGIA) shows a compositional bias: low complexity.

This sequence belongs to the RNase HII family. Requires Mn(2+) as cofactor. It depends on Mg(2+) as a cofactor.

The protein localises to the cytoplasm. The enzyme catalyses Endonucleolytic cleavage to 5'-phosphomonoester.. Functionally, endonuclease that specifically degrades the RNA of RNA-DNA hybrids. In Anaeromyxobacter sp. (strain Fw109-5), this protein is Ribonuclease HII.